We begin with the raw amino-acid sequence, 312 residues long: Probable deoxyhypusine synthase (312 aa).

The Nucleophile role is filled by Lys-285.

Belongs to the deoxyhypusine synthase family. The cofactor is NAD(+).

It catalyses the reaction [eIF5A protein]-L-lysine + spermidine = [eIF5A protein]-deoxyhypusine + propane-1,3-diamine. Its pathway is protein modification; eIF5A hypusination. In terms of biological role, catalyzes the NAD-dependent oxidative cleavage of spermidine and the subsequent transfer of the butylamine moiety of spermidine to the epsilon-amino group of a specific lysine residue of the eIF-5A precursor protein to form the intermediate deoxyhypusine residue. The protein is Probable deoxyhypusine synthase of Saccharolobus islandicus (strain Y.N.15.51 / Yellowstone #2) (Sulfolobus islandicus).